We begin with the raw amino-acid sequence, 156 residues long: MNMNELVFIDDFDNHVVIMSEVVMRLNSYRQTHYTSTESGGTLIGERRGQHLVITHISEPGQDDVRNRTGLERKGIHHQQKVNDLFQQSNGFIVYLGEWHTHPEDFPHPSFIDIKSWVMGIVATEPMIMLIVGRKDIWIGKKIKNDIKKLKKKMVS.

The MPN domain maps to 9 to 147 (IDDFDNHVVI…WIGKKIKNDI (139 aa)). Residue E38 is the Proton donor/acceptor of the active site. Zn(2+) is bound by residues H100, H102, and D113. Residues 100-113 (HTHPEDFPHPSFID) carry the JAMM motif motif.

Belongs to the peptidase M67B family. Cap3 isopeptidase subfamily.

In terms of biological role, metalloprotease priming reversal component of a CBASS antivirus system. CBASS (cyclic oligonucleotide-based antiphage signaling system) provides immunity against bacteriophages. The CD-NTase protein (DncV) synthesizes cyclic nucleotides in response to infection; these serve as specific second messenger signals. The signals activate a diverse range of effectors, leading to bacterial cell death and thus abortive phage infection. A type II-A(GA) CBASS system. Reverses the primed state of DncV, the CD-NTase, cleaving it from cellular proteins. Cleaves a Sumo-DncV-DncV fusion protein precisely between the 2 DncV moieties. Functionally, protects E.coli against phage infection. When capV and dncV are introduced in E.coli MG1655 there is 1000-fold protection against phage P1; protection against other phage (T4, T5 and T6) requires the 2 subsequent genes. In another paper the capV-dncV-cap2-cap3 operon gives 10(4)-10(5)-fold protection against phages lambda, T2, T4 and T6, about 1000-fold protection against P1 and 10-fold protection against T5. The polypeptide is CD-NTase/cGAS isopeptidase (Escherichia coli (strain TW11681)).